A 425-amino-acid polypeptide reads, in one-letter code: MSKVAEIRGLEVLDSRGNPTVEVEVVLDDGAVGRAIVPSGASTGAREAVELRDADPRRYLGRGVLRAVQAVNTELCEALLGRDAGDQPEIDTIMIDLDGTPDKRRLGANALLGVSLAVAHAAAMSNGLPLFAYLGGERASLLPVPLINVINGGAHADNALDFQEFMIVPAGAPTFTEAVRASAEVFHTLRAMLKAAGYTTNVGDEGGFAPEFHAAEEALDILVAAIAKAGYRPGEDIALAIDPAASELYVNGSYVYQGEGVERSREEQVAYLVRLADRYPIVSIEDGMAEDDAMGWQLLTRQLGKRCQLVGDDVFCTHPTLLRQGVEQGMANAILVKANQIGTLSEMRETVRVAHGYAYSAVMSHRSGETEDVTIADLAVALRCGQIKTGSMSRADRTAKYNRLLRIERELGSRAEYAGALLRRR.

A (2R)-2-phosphoglycerate-binding site is contributed by Gln163. The active-site Proton donor is Glu205. Asp242, Glu285, and Asp312 together coordinate Mg(2+). (2R)-2-phosphoglycerate is bound by residues Lys337, Arg366, Ser367, and Lys388. Lys337 acts as the Proton acceptor in catalysis.

Belongs to the enolase family. It depends on Mg(2+) as a cofactor.

The protein localises to the cytoplasm. Its subcellular location is the secreted. The protein resides in the cell surface. It carries out the reaction (2R)-2-phosphoglycerate = phosphoenolpyruvate + H2O. Its pathway is carbohydrate degradation; glycolysis; pyruvate from D-glyceraldehyde 3-phosphate: step 4/5. In terms of biological role, catalyzes the reversible conversion of 2-phosphoglycerate (2-PG) into phosphoenolpyruvate (PEP). It is essential for the degradation of carbohydrates via glycolysis. The chain is Enolase 2 from Cupriavidus metallidurans (strain ATCC 43123 / DSM 2839 / NBRC 102507 / CH34) (Ralstonia metallidurans).